A 288-amino-acid chain; its full sequence is UTP--glucose-1-phosphate uridylyltransferase (288 aa).

Belongs to the UDPGP type 2 family.

The enzyme catalyses alpha-D-glucose 1-phosphate + UTP + H(+) = UDP-alpha-D-glucose + diphosphate. It participates in glycolipid metabolism; diglucosyl-diacylglycerol biosynthesis. In terms of biological role, catalyzes the formation of UDP-glucose from glucose-1-phosphate and UTP. This is an intermediate step in the biosynthesis of diglucosyl-diacylglycerol (Glc2-DAG), i.e. a glycolipid found in the membrane, which is also used as a membrane anchor for lipoteichoic acid (LTA). This Staphylococcus haemolyticus (strain JCSC1435) protein is UTP--glucose-1-phosphate uridylyltransferase (gtaB).